The primary structure comprises 385 residues: Glucans biosynthesis protein C (385 aa).

Helical transmembrane passes span 17-37 (AWLM…SHTW), 60-80 (MQVF…RYPL), 91-111 (VGIP…IMLQ), 137-157 (ISHL…VWIF), 173-193 (KFSM…YAVI), 212-232 (FIVM…LAFI), 239-259 (LFTT…VAYL), 274-294 (TESV…FSFG), 311-331 (ASLF…AYIT), and 338-358 (WLGF…LYEI).

The protein belongs to the acyltransferase 3 family. OpgC subfamily.

The protein resides in the cell membrane. It functions in the pathway glycan metabolism; osmoregulated periplasmic glucan (OPG) biosynthesis. In terms of biological role, necessary for the succinyl substitution of periplasmic glucans. Could catalyze the transfer of succinyl residues from the cytoplasmic side of the membrane to the nascent glucan backbones on the periplasmic side of the membrane. The protein is Glucans biosynthesis protein C of Escherichia coli (strain K12 / MC4100 / BW2952).